Consider the following 186-residue polypeptide: MKEEEEIGKPAKPKAKKDVAPGRLIDTYAAQCDNCHKWRVIDSQEEYEDIRSKMLEDPFNCQKKQGMSCEEPADIDYDSSRTWVIDKPGLPKTPKGFKRSLVLRKDYSKMDTYYFTPTGKKLRSRNEIAAFVEANPEFRNAPLGDFNFTVPKVMEDTVPPDPKLGSPFPSTTTTTSEKSSVKQSHN.

The CW-type zinc finger occupies 22-77 (GRLIDTYAAQCDNCHKWRVIDSQEEYEDIRSKMLEDPFNCQKKQGMSCEEPADIDY). Positions 31 to 69 (QCDNCHKWRVIDSQEEYEDIRSKMLEDPFNCQKKQGMSC) match the MBD-associated domain (MAD) motif. Zn(2+) is bound by residues cysteine 32, cysteine 35, cysteine 61, and cysteine 69. The MBD domain maps to 83-153 (WVIDKPGLPK…GDFNFTVPKV (71 aa)). Residues 154-186 (MEDTVPPDPKLGSPFPSTTTTTSEKSSVKQSHN) form a disordered region. Positions 166 to 178 (SPFPSTTTTTSEK) are enriched in low complexity.

In terms of tissue distribution, expressed in rosette leaves, buds, flowers, stems, mature seeds and roots.

Its subcellular location is the nucleus. In terms of biological role, transcriptional regulator that binds CpG, CpNpN and CpNpG (N is A, T, or C) islands in promoters regardless the DNA methylation status. Plays probably a role in gene silencing. In Arabidopsis thaliana (Mouse-ear cress), this protein is Methyl-CpG-binding domain-containing protein 4 (MBD4).